A 190-amino-acid polypeptide reads, in one-letter code: NADH dehydrogenase [ubiquinone] iron-sulfur protein 3 (190 aa).

This sequence belongs to the complex I 30 kDa subunit family. As to quaternary structure, complex I is composed of at least 49 different subunits. This is a component of the iron-sulfur (IP) fragment of the enzyme.

It localises to the mitochondrion inner membrane. The catalysed reaction is a ubiquinone + NADH + 5 H(+)(in) = a ubiquinol + NAD(+) + 4 H(+)(out). Core subunit of the mitochondrial membrane respiratory chain NADH dehydrogenase (Complex I) that is believed to belong to the minimal assembly required for catalysis. Complex I functions in the transfer of electrons from NADH to the respiratory chain. The immediate electron acceptor for the enzyme is believed to be ubiquinone. This chain is NADH dehydrogenase [ubiquinone] iron-sulfur protein 3 (NAD9), found in Arabidopsis thaliana (Mouse-ear cress).